The chain runs to 476 residues: Probable secreted beta-glucosidase SIM1 (476 aa).

The first 19 residues, 1–19 (MKFSTAVTTLISSGAIVSA), serve as a signal peptide directing secretion. The span at 111–203 (ATASTSQGAS…SSSSSSSGSG (93 aa)) shows a compositional bias: low complexity. A disordered region spans residues 111–214 (ATASTSQGAS…IYGDLADFSG (104 aa)). Asparagine 423 is a glycosylation site (N-linked (GlcNAc...) asparagine).

Belongs to the SUN family.

It is found in the secreted. It localises to the cell wall. Functionally, involved in the remodeling of the cell wall during the various phases of yeast culture development and under various environmental conditions. Required for the maintenance of the CLB5 kinase activity. The sequence is that of Probable secreted beta-glucosidase SIM1 (SIM1) from Saccharomyces cerevisiae (strain ATCC 204508 / S288c) (Baker's yeast).